We begin with the raw amino-acid sequence, 376 residues long: 26S proteasome non-ATPase regulatory subunit 13 (376 aa).

The PCI domain occupies 171–338; sequence SYYKDALRFL…KRVHMTWVQP (168 aa).

Component of the 19S proteasome regulatory particle complex. The 26S proteasome consists of a 20S core particle (CP) and two 19S regulatory subunits (RP). The regulatory particle is made of a lid composed of 9 subunits including PSMD13, a base containing 6 ATPases and few additional components.

Its function is as follows. Component of the 26S proteasome, a multiprotein complex involved in the ATP-dependent degradation of ubiquitinated proteins. This complex plays a key role in the maintenance of protein homeostasis by removing misfolded or damaged proteins, which could impair cellular functions, and by removing proteins whose functions are no longer required. Therefore, the proteasome participates in numerous cellular processes, including cell cycle progression, apoptosis, or DNA damage repair. This Gallus gallus (Chicken) protein is 26S proteasome non-ATPase regulatory subunit 13.